We begin with the raw amino-acid sequence, 326 residues long: Peptidoglycan-binding protein ArfA (326 aa).

The disordered stretch occupies residues 1–21 (MASKAGLGQTPATTDARRTQK). A required for protein translocation to the outer membrane region spans residues 1 to 73 (MASKAGLGQT…PTLTPTSTRG (73 aa)). Residues 30-50 (PWLIGAVVIPLLIAAIGYGAF) form a helical membrane-spanning segment. The BON domain maps to 127 to 196 (DPVVRSLDFS…KIVNNIEVTG (70 aa)). Cysteines 208 and 250 form a disulfide. The OmpA-like domain maps to 212–326 (QSAINAVTGG…KNRRVEIVVN (115 aa)).

Belongs to the outer membrane OOP (TC 1.B.6) superfamily. ArfA family. It depends on Zn(2+) as a cofactor.

It is found in the secreted. Its subcellular location is the cell wall. The protein resides in the cell outer membrane. Functionally, probably plays a role in ammonia secretion that neutralizes the medium at pH 5.5, although it does not play a direct role in ammonia transport. The chain is Peptidoglycan-binding protein ArfA (arfA) from Mycobacterium tuberculosis (strain CDC 1551 / Oshkosh).